Here is a 196-residue protein sequence, read N- to C-terminus: uncharacterized protein (196 aa).

Positions Met-1–Ala-21 are cleaved as a signal peptide. Cys-22 carries the N-palmitoyl cysteine lipid modification. A lipid anchor (S-diacylglycerol cysteine) is attached at Cys-22.

The protein localises to the cell membrane. This is an uncharacterized protein from Treponema pallidum (strain Nichols).